The sequence spans 325 residues: Transcription initiation factor IIB (325 aa).

The TFIIB-type zinc finger occupies 19 to 52 (NKLWCMVCRIQDPDIIEDYAKGDLICRGCGVVVG). Zn(2+) is bound by residues cysteine 23, cysteine 26, cysteine 44, and cysteine 47. 2 consecutive repeat copies span residues 131–207 (MADH…IMKE) and 227–303 (FCST…DLYA).

This sequence belongs to the TFIIB family.

Its subcellular location is the nucleus. Functionally, general transcription factor that plays a role in transcription initiation by RNA polymerase II (Pol II). Involved in the pre-initiation complex (PIC) formation and Pol II recruitment at promoter DNA. This is Transcription initiation factor IIB (gtf2b) from Dictyostelium discoideum (Social amoeba).